A 318-amino-acid chain; its full sequence is tRNA U34 carboxymethyltransferase (318 aa).

Positions 88, 102, 107, 126, 192, 196, and 311 each coordinate carboxy-S-adenosyl-L-methionine.

It belongs to the class I-like SAM-binding methyltransferase superfamily. CmoB family. Homotetramer.

It carries out the reaction carboxy-S-adenosyl-L-methionine + 5-hydroxyuridine(34) in tRNA = 5-carboxymethoxyuridine(34) in tRNA + S-adenosyl-L-homocysteine + H(+). Functionally, catalyzes carboxymethyl transfer from carboxy-S-adenosyl-L-methionine (Cx-SAM) to 5-hydroxyuridine (ho5U) to form 5-carboxymethoxyuridine (cmo5U) at position 34 in tRNAs. This Pseudomonas fluorescens (strain ATCC BAA-477 / NRRL B-23932 / Pf-5) protein is tRNA U34 carboxymethyltransferase.